The primary structure comprises 316 residues: Beta-ketoacyl-[acyl-carrier-protein] synthase III (316 aa).

Active-site residues include C112 and H243. An ACP-binding region spans residues 244-248 (QANLR). N273 is a catalytic residue.

The protein belongs to the thiolase-like superfamily. FabH family. In terms of assembly, homodimer.

It is found in the cytoplasm. The catalysed reaction is malonyl-[ACP] + acetyl-CoA + H(+) = 3-oxobutanoyl-[ACP] + CO2 + CoA. The protein operates within lipid metabolism; fatty acid biosynthesis. Functionally, catalyzes the condensation reaction of fatty acid synthesis by the addition to an acyl acceptor of two carbons from malonyl-ACP. Catalyzes the first condensation reaction which initiates fatty acid synthesis and may therefore play a role in governing the total rate of fatty acid production. Possesses both acetoacetyl-ACP synthase and acetyl transacylase activities. Its substrate specificity determines the biosynthesis of branched-chain and/or straight-chain of fatty acids. The protein is Beta-ketoacyl-[acyl-carrier-protein] synthase III of Yersinia pseudotuberculosis serotype O:1b (strain IP 31758).